Reading from the N-terminus, the 194-residue chain is Large ribosomal subunit protein bL9 (194 aa).

Residues 165 to 194 are disordered; sequence PEDAEEAVANEEEAEAALLDDEDADEYEQG. Positions 166-194 are enriched in acidic residues; that stretch reads EDAEEAVANEEEAEAALLDDEDADEYEQG.

It belongs to the bacterial ribosomal protein bL9 family.

Binds to the 23S rRNA. The sequence is that of Large ribosomal subunit protein bL9 from Rhodospirillum rubrum (strain ATCC 11170 / ATH 1.1.1 / DSM 467 / LMG 4362 / NCIMB 8255 / S1).